The sequence spans 209 residues: FMN-dependent NADH:quinone oxidoreductase 2 (209 aa).

Residues serine 9, 15–17 (SVS), and 97–100 (MWNF) contribute to the FMN site.

This sequence belongs to the azoreductase type 1 family. In terms of assembly, homodimer. It depends on FMN as a cofactor.

The enzyme catalyses 2 a quinone + NADH + H(+) = 2 a 1,4-benzosemiquinone + NAD(+). It carries out the reaction N,N-dimethyl-1,4-phenylenediamine + anthranilate + 2 NAD(+) = 2-(4-dimethylaminophenyl)diazenylbenzoate + 2 NADH + 2 H(+). Its function is as follows. Quinone reductase that provides resistance to thiol-specific stress caused by electrophilic quinones. Also exhibits azoreductase activity. Catalyzes the reductive cleavage of the azo bond in aromatic azo compounds to the corresponding amines. This Pseudomonas syringae pv. tomato (strain ATCC BAA-871 / DC3000) protein is FMN-dependent NADH:quinone oxidoreductase 2.